A 190-amino-acid chain; its full sequence is Elongation factor P (190 aa).

It belongs to the elongation factor P family.

It localises to the cytoplasm. It functions in the pathway protein biosynthesis; polypeptide chain elongation. Its function is as follows. Involved in peptide bond synthesis. Stimulates efficient translation and peptide-bond synthesis on native or reconstituted 70S ribosomes in vitro. Probably functions indirectly by altering the affinity of the ribosome for aminoacyl-tRNA, thus increasing their reactivity as acceptors for peptidyl transferase. The polypeptide is Elongation factor P (Pseudomonas fluorescens (strain ATCC BAA-477 / NRRL B-23932 / Pf-5)).